The sequence spans 298 residues: ATP synthase gamma chain (298 aa).

The protein belongs to the ATPase gamma chain family. As to quaternary structure, F-type ATPases have 2 components, CF(1) - the catalytic core - and CF(0) - the membrane proton channel. CF(1) has five subunits: alpha(3), beta(3), gamma(1), delta(1), epsilon(1). CF(0) has three main subunits: a, b and c.

Its subcellular location is the cell inner membrane. Produces ATP from ADP in the presence of a proton gradient across the membrane. The gamma chain is believed to be important in regulating ATPase activity and the flow of protons through the CF(0) complex. The polypeptide is ATP synthase gamma chain (Francisella tularensis subsp. tularensis (strain WY96-3418)).